We begin with the raw amino-acid sequence, 90 residues long: MSKKTFEELFTELQHKAANGDPSTSRTAELVGKGVHAIGKKVVEEAAEVWMAAEYEGKDAAAEEISQLLYHVQVMMVARGISLDDVYAHL.

Belongs to the PRA-PH family.

It is found in the cytoplasm. It carries out the reaction 1-(5-phospho-beta-D-ribosyl)-ATP + H2O = 1-(5-phospho-beta-D-ribosyl)-5'-AMP + diphosphate + H(+). It functions in the pathway amino-acid biosynthesis; L-histidine biosynthesis; L-histidine from 5-phospho-alpha-D-ribose 1-diphosphate: step 2/9. This is Phosphoribosyl-ATP pyrophosphatase from Streptomyces avermitilis (strain ATCC 31267 / DSM 46492 / JCM 5070 / NBRC 14893 / NCIMB 12804 / NRRL 8165 / MA-4680).